An 88-amino-acid chain; its full sequence is uncharacterized protein (88 aa).

Residues 1–22 (MLKASILFITISLTLMLENSYG) form the signal peptide. 3 cysteine pairs are disulfide-bonded: C59/C73, C66/C77, and C72/C82.

It localises to the secreted. This is an uncharacterized protein from Schistosoma japonicum (Blood fluke).